The following is a 233-amino-acid chain: Antigenic membrane protein (233 aa).

An N-terminal signal peptide occupies residues 1-32 (MQNQKNQKSLVAKVLVLFAAVALMFVGVQVFA). Residues 206 to 226 (FLTLVAVVVVAAVAGGVFFFV) traverse the membrane as a helical segment.

The protein localises to the cell membrane. The chain is Antigenic membrane protein (amp) from Onion yellows phytoplasma (strain OY-M).